The following is a 151-amino-acid chain: Urease accessory protein UreE (151 aa).

Belongs to the UreE family.

The protein localises to the cytoplasm. Involved in urease metallocenter assembly. Binds nickel. Probably functions as a nickel donor during metallocenter assembly. The chain is Urease accessory protein UreE from Lachnoclostridium phytofermentans (strain ATCC 700394 / DSM 18823 / ISDg) (Clostridium phytofermentans).